The chain runs to 170 residues: Centrin-2 (170 aa).

The interval 1-21 is disordered; that stretch reads MQRGALRGASPTARRRLVDRP. EF-hand domains are found at residues 26–61, 62–97, 99–134, and 135–170; these read DEIEEIREAFNLFDTDGSGMIDPKELKAAMQSLGFE, TKNPTIYQMIADLDRDSGGPIDFEEFLDAITAKLGD, ESREGIQKIFSLFDDDRTGTITLKNLKRVAKELGET, and MSEDELREMLERADSNGDGEISFEDFYAIMTKKTFP. Ca(2+)-binding residues include D39, D41, S43, M45, and E50.

It belongs to the centrin family. Monomer. Does not homooligomerize.

Its subcellular location is the cytoplasm. The protein resides in the cytoskeleton. It is found in the microtubule organizing center. It localises to the centrosome. Functionally, in tachyzoites, plays an essential role in microneme secretion that ensures parasite motility and attachment to, invasion of and egress from host cells. Also involved in the architecture of the peripheral annuli where it appears to regulate the localization of PAP2. In association with the myosin motor MyoJ, involved in the constriction of the basal complex at the end of daughter cell division in an actin-dependent manner; the basal complex is a cytoskeletal structure formed at the tachyzoite basal pole during daughter cell formation. May be involved in parasite replication. The sequence is that of Centrin-2 from Toxoplasma gondii (strain ATCC 50611 / Me49).